A 542-amino-acid polypeptide reads, in one-letter code: CTP synthase (542 aa).

The interval 1 to 265 (MTKFVFVTGG…DEIVCHKLNL (265 aa)) is amidoligase domain. Residue serine 13 participates in CTP binding. Serine 13 lines the UTP pocket. ATP contacts are provided by residues 14 to 19 (SLGKGI) and aspartate 71. Residues aspartate 71 and glutamate 139 each coordinate Mg(2+). Residues 146–148 (DIE), 186–191 (KTKPTQ), and lysine 222 each bind CTP. Residues 186–191 (KTKPTQ) and lysine 222 contribute to the UTP site. The 253-residue stretch at 290–542 (NVAFVGKYVD…IAAALANRKA (253 aa)) folds into the Glutamine amidotransferase type-1 domain. An L-glutamine-binding site is contributed by glycine 351. Catalysis depends on cysteine 378, which acts as the Nucleophile; for glutamine hydrolysis. L-glutamine-binding positions include 379–382 (LGMQ), glutamate 402, and arginine 468. Residues histidine 515 and glutamate 517 contribute to the active site.

Belongs to the CTP synthase family. As to quaternary structure, homotetramer.

It catalyses the reaction UTP + L-glutamine + ATP + H2O = CTP + L-glutamate + ADP + phosphate + 2 H(+). It carries out the reaction L-glutamine + H2O = L-glutamate + NH4(+). The catalysed reaction is UTP + NH4(+) + ATP = CTP + ADP + phosphate + 2 H(+). The protein operates within pyrimidine metabolism; CTP biosynthesis via de novo pathway; CTP from UDP: step 2/2. Allosterically activated by GTP, when glutamine is the substrate; GTP has no effect on the reaction when ammonia is the substrate. The allosteric effector GTP functions by stabilizing the protein conformation that binds the tetrahedral intermediate(s) formed during glutamine hydrolysis. Inhibited by the product CTP, via allosteric rather than competitive inhibition. In terms of biological role, catalyzes the ATP-dependent amination of UTP to CTP with either L-glutamine or ammonia as the source of nitrogen. Regulates intracellular CTP levels through interactions with the four ribonucleotide triphosphates. The sequence is that of CTP synthase from Methylobacillus flagellatus (strain ATCC 51484 / DSM 6875 / VKM B-1610 / KT).